A 37-amino-acid chain; its full sequence is Cytochrome b6-f complex subunit 5 (37 aa).

Residues L5 to A25 form a helical membrane-spanning segment.

Belongs to the PetG family. As to quaternary structure, the 4 large subunits of the cytochrome b6-f complex are cytochrome b6, subunit IV (17 kDa polypeptide, PetD), cytochrome f and the Rieske protein, while the 4 small subunits are PetG, PetL, PetM and PetN. The complex functions as a dimer.

It localises to the cellular thylakoid membrane. Component of the cytochrome b6-f complex, which mediates electron transfer between photosystem II (PSII) and photosystem I (PSI), cyclic electron flow around PSI, and state transitions. PetG is required for either the stability or assembly of the cytochrome b6-f complex. This is Cytochrome b6-f complex subunit 5 from Cyanothece sp. (strain PCC 7425 / ATCC 29141).